The chain runs to 1200 residues: Ice nucleation protein (1200 aa).

The octapeptide periodicity stretch occupies residues 176 to 1151; the sequence is ATYGSTLSGD…LSAGEDSILI (976 aa).

Belongs to the bacterial ice nucleation protein family.

It localises to the cell outer membrane. Functionally, ice nucleation proteins enable bacteria to nucleate crystallization in supercooled water. The protein is Ice nucleation protein (inaZ) of Pseudomonas syringae pv. syringae.